The following is an 842-amino-acid chain: ATP-binding cassette sub-family B member 6 (842 aa).

Over 1-26 (MVTVGNYCEAEGPVGPAWMQDGLSPC) the chain is Lumenal. A required for the lysosomal targeting region spans residues 1-205 (MVTVGNYCEA…SGGLFVLGLW (205 aa)). Residues 1 to 236 (MVTVGNYCEA…RSQVRSAAQQ (236 aa)) form a required for ATPase activity region. The N-linked (GlcNAc...) asparagine glycan is linked to Asn6. An intrachain disulfide couples Cys8 to Cys26. The helical transmembrane segment at 27–47 (FFFTLVPSTRMALGTLALVLA) threads the bilayer. The Cytoplasmic portion of the chain corresponds to 48–72 (LPCRRRERPAGADSLSWGAGPRISP). A helical membrane pass occupies residues 73–93 (YVLQLLLATLQAALPLAGLAG). Over 94–106 (RVGTARGAPLPSY) the chain is Lumenal. The helical transmembrane segment at 107–127 (LLLASVLESLAGACGLWLLVV) threads the bilayer. Residues 128–147 (ERSQARQRLAMGIWIKFRHS) are Cytoplasmic-facing. A helical transmembrane segment spans residues 148–168 (PGLLLLWTVAFAAENLALVSW). The Lumenal segment spans residues 169–185 (NSPQWWWARADLGQQVQ). The helical transmembrane segment at 186–206 (FSLWVLRYVVSGGLFVLGLWA) threads the bilayer. Residues 207-263 (PGLRPQSYTLQVHEEDQDVERSQVRSAAQQSTWRDFGRKLRLLSGYLWPRGSPALQL) are Cytoplasmic-facing. A helical membrane pass occupies residues 264–284 (VVLICLGLMGLERALNVLVPI). Residues 265 to 556 (VLICLGLMGL…FGTYYRMIQT (292 aa)) enclose the ABC transmembrane type-1 domain. The Lumenal portion of the chain corresponds to 285 to 291 (FYRNIVN). Residues 292-312 (LLTEKAPWNSLAWTVTSYVFL) traverse the membrane as a helical segment. Over 313–375 (KFLQGGGTGS…TGEVLRIADR (63 aa)) the chain is Cytoplasmic. The chain crosses the membrane as a helical span at residues 376-396 (GTSSVTGLLSYLVFNVIPTLA). Position 397 (Asp397) is a topological domain, lumenal. A helical transmembrane segment spans residues 398-418 (IIIGIIYFSMFFNAWFGLIVF). Residues 419-499 (LCMSLYLTLT…SSASLVLLNQ (81 aa)) are Cytoplasmic-facing. Residues 500-520 (TQNLVIGLGLLAGSLLCAYFV) traverse the membrane as a helical segment. Residues 521 to 529 (TEQKLQVGD) lie on the Lumenal side of the membrane. Residues 530–550 (YVLFGTYIIQLYMPLNWFGTY) traverse the membrane as a helical segment. The Cytoplasmic portion of the chain corresponds to 551–842 (YRMIQTNFID…EDTKPQTMER (292 aa)). Residues 590–824 (IEFENVHFSY…GGVYADMWQL (235 aa)) form the ABC transporter domain. Residues Tyr599 and 623–634 (GPSGAGKSTILR) contribute to the ATP site.

The protein belongs to the ABC transporter superfamily. ABCB family. Heavy Metal importer (TC 3.A.1.210) subfamily. Homodimer. N-glycosylated. In terms of tissue distribution, widely expressed. High expression is detected in the retinal epithelium. Expressed in mature erythrocytes.

It is found in the cell membrane. The protein localises to the mitochondrion outer membrane. Its subcellular location is the endoplasmic reticulum membrane. The protein resides in the golgi apparatus membrane. It localises to the endosome membrane. It is found in the lysosome membrane. The protein localises to the late endosome membrane. Its subcellular location is the early endosome membrane. The protein resides in the secreted. It localises to the extracellular exosome. It is found in the mitochondrion. The protein localises to the endosome. Its subcellular location is the multivesicular body membrane. The protein resides in the melanosome membrane. It catalyses the reaction heme b(in) + ATP + H2O = heme b(out) + ADP + phosphate + H(+). The catalysed reaction is coproporphyrin III(in) + ATP + H2O = coproporphyrin III(out) + ADP + phosphate + H(+). The enzyme catalyses pheophorbide a(in) + ATP + H2O = pheophorbide a(out) + ADP + phosphate + H(+). It carries out the reaction coproporphyrinogen III(in) + ATP + H2O = coproporphyrinogen III(out) + ADP + phosphate + H(+). It catalyses the reaction protoporphyrin IX(in) + ATP + H2O = protoporphyrin IX(out) + ADP + phosphate + H(+). The catalysed reaction is coproporphyrin I(in) + ATP + H2O = coproporphyrin I(out) + ADP + phosphate + H(+). The enzyme catalyses uroporphyrin I(in) + ATP + H2O = uroporphyrin I(out) + ADP + phosphate + H(+). It carries out the reaction uroporphyrin III(in) + ATP + H2O = uroporphyrin III(out) + ADP + phosphate + H(+). ATPase activity is inhibited by MgATP with an IC(50) of 1.03 mM and up-regulated by coporphyrin III&gt; hemin &gt; protoporphyrin IX. ATPase activity for hemin is up-regulated by glutathione. The ATPase activity is impaired by increasing copper concentrations (0-300 uM). The ATPase activity is stimulated in presence of glutathione for increasing copper concentrations (0-300 uM). In terms of biological role, ATP-dependent transporter that catalyzes the transport of a broad-spectrum of porphyrins from the cytoplasm to the extracellular space through the plasma membrane or into the vesicle lumen. May also function as an ATP-dependent importer of porphyrins from the cytoplasm into the mitochondria, in turn may participate in the de novo heme biosynthesis regulation and in the coordination of heme and iron homeostasis during phenylhydrazine stress. May also play a key role in the early steps of melanogenesis producing PMEL amyloid fibrils. In vitro, it confers to cells a resistance to toxic metal such as arsenic and cadmium and against chemotherapeutics agent such as 5-fluorouracil, SN-38 and vincristin. In addition may play a role in the transition metal homeostasis. In Homo sapiens (Human), this protein is ATP-binding cassette sub-family B member 6.